The primary structure comprises 790 residues: PGC-1 and ERR-induced regulator in muscle protein 1 (790 aa).

Disordered regions lie at residues 38-391, 425-449, 507-545, and 626-648; these read LLSS…TPIS, VASSPPVSEAVPRMTESSGLVSTPV, SVAGPSPNKPGSGQASARPSAPQTATGAHGGPGAWEAVA, and QRSRRRGSPEPLPRADPVPAPIP. The span at 40–52 shows a compositional bias: low complexity; the sequence is SSDIDQGDSSGSS. Composition is skewed to polar residues over residues 80-89 and 98-107; these read ATQQPVSRSQ and TGQQTPSTSA. A compositionally biased stretch (low complexity) spans 111–123; that stretch reads APPSLGPGASPPS. Positions 146–157 are enriched in pro residues; that stretch reads APRPPGEPPGSP. A compositionally biased stretch (low complexity) spans 158-169; it reads KSPGHSTGSQRP. Residues 170–179 are compositionally biased toward pro residues; that stretch reads PDSPGAPPRS. The segment covering 366–391 has biased composition (polar residues); the sequence is KPQSDTAVSTPASEPQSSVALSTPIS. The segment covering 515–532 has biased composition (polar residues); it reads KPGSGQASARPSAPQTAT. A compositionally biased stretch (pro residues) spans 635-648; it reads EPLPRADPVPAPIP.

In terms of tissue distribution, muscle-specific expression is increased by endurance exercise.

It localises to the cytoplasm. The protein resides in the nucleus. Functionally, regulates the expression of selective PPARGC1A/B and ESRRA/B/G target genes with roles in glucose and lipid metabolism, energy transfer, contractile function, muscle mitochondrial biogenesis and oxidative capacity. Required for the efficient induction of MT-CO2, MT-CO3, COX4I1, TFB1M, TFB2M, POLRMT and SIRT3 by PPARGC1A. Positively regulates the PPARGC1A/ESRRG-induced expression of CKMT2, TNNI3 and SLC2A4 and negatively regulates the PPARGC1A/ESRRG-induced expression of PDK4. In Homo sapiens (Human), this protein is PGC-1 and ERR-induced regulator in muscle protein 1 (PERM1).